The following is a 930-amino-acid chain: Semaphorin-6C (930 aa).

An N-terminal signal peptide occupies residues 1 to 24; that stretch reads MPRAPHFMPLLLLLLLLSLPHTQA. Over 25–604 the chain is Extracellular; it reads AFPQDPLPLL…ASASRSVPIP (580 aa). Residues 30–516 enclose the Sema domain; that stretch reads PLPLLISDLQ…FSGCIVYLPL (487 aa). A glycan (N-linked (GlcNAc...) asparagine) is linked at Asn70. 4 disulfides stabilise this stretch: Cys111/Cys121, Cys139/Cys148, Cys262/Cys373, and Cys287/Cys332. The N-linked (GlcNAc...) asparagine glycan is linked to Asn286. N-linked (GlcNAc...) asparagine glycosylation is present at Asn437. 4 disulfide bridges follow: Cys479–Cys510, Cys519–Cys537, Cys525–Cys570, and Cys529–Cys545. Positions 554–593 are disordered; it reads TDVDQAGNQESMEHGDCQDGATGSQSGPGDSAYGVRRDLP. Residues 605–625 traverse the membrane as a helical segment; it reads LLLASVAAAFALGASVSGLLV. The Cytoplasmic portion of the chain corresponds to 626–930; the sequence is SCACRRAHRR…AVPNGGRFNF (305 aa). Disordered stretches follow at residues 654-674, 716-761, 775-882, and 908-930; these read LARL…GDAV, GDPW…PGQA, HGPQ…PGKH, and SLKP…RFNF. Residues 829 to 844 are compositionally biased toward low complexity; that stretch reads ASAPARPALSAPAPRL.

The protein belongs to the semaphorin family. In terms of tissue distribution, in adult tissues, expressed only in skeletal muscle.

Its subcellular location is the cell membrane. Its function is as follows. Shows growth cone collapsing activity on dorsal root ganglion (DRG) neurons in vitro. May be a stop signal for the DRG neurons in their target areas, and possibly also for other neurons. May also be involved in the maintenance and remodeling of neuronal connections. The sequence is that of Semaphorin-6C (SEMA6C) from Homo sapiens (Human).